The chain runs to 871 residues: DNA mismatch repair protein MutS (871 aa).

G605–S612 serves as a coordination point for ATP. The tract at residues P791–S840 is disordered. The span at E827–S840 shows a compositional bias: basic and acidic residues.

It belongs to the DNA mismatch repair MutS family.

Its function is as follows. This protein is involved in the repair of mismatches in DNA. It is possible that it carries out the mismatch recognition step. This protein has a weak ATPase activity. The chain is DNA mismatch repair protein MutS from Shouchella clausii (strain KSM-K16) (Alkalihalobacillus clausii).